A 981-amino-acid chain; its full sequence is Helicase-like transcription factor CHR28 (981 aa).

Disordered stretches follow at residues 1–66 and 112–194; these read MDSA…LDSR and KRTH…RNSE. Residues 46–65 are compositionally biased toward polar residues; the sequence is SGSSSGANGHTKTGLTNLDS. The span at 119-128 shows a compositional bias: pro residues; sequence FSRPPFPPRP. A compositionally biased stretch (polar residues) spans 166-176; it reads HGTSASPSHFN. Over residues 181–194 the composition is skewed to basic and acidic residues; sequence PMHRNGIGEERNSE. The region spanning 241–526 is the Helicase ATP-binding domain; the sequence is ETNSLHCMGG…YSYFRFLKYD (286 aa). 254-261 contributes to the ATP binding site; that stretch reads DDQGLGKT. 2 disordered regions span residues 293-337 and 439-462; these read DADD…RKFN and VVGT…SDPD. Residues 439–451 are compositionally biased toward basic residues; the sequence is VVGTTKKSKKKKG. The RING-type; degenerate zinc finger occupies 679-718; that stretch reads CCVCHDPPEDPVVTLCGHIFCYQCVSDYITGDEDTCPAPR. Residues 779–798 show a composition bias toward polar residues; it reads NQGTSNSTQNGQMASSSQQP. The disordered stretch occupies residues 779 to 808; it reads NQGTSNSTQNGQMASSSQQPNDDDDDDDDD. Over residues 799–808 the composition is skewed to acidic residues; that stretch reads NDDDDDDDDD. One can recognise a Helicase C-terminal domain in the interval 804–976; that stretch reads DDDDDVTIVE…ATRLTVDDLK (173 aa).

It belongs to the SNF2/RAD54 helicase family. RAD16 subfamily. Interacts with SUVR2.

Its subcellular location is the nucleus. Its function is as follows. Probable helicase-like transcription factor involved in transcriptional gene silencing. Associates with SUVR2 and contributes to transcriptional gene silencing at RNA-directed DNA methylation (RdDM) target loci but also at RdDM-independent target loci. May be involved in nucleosome positioning to form ordered nucleosome arrays on chromatin. Associates with SUVR2 and functions redundantly with FRG1. Required for the efficient methylation of a broad range of RdDM target loci. In Arabidopsis thaliana (Mouse-ear cress), this protein is Helicase-like transcription factor CHR28.